We begin with the raw amino-acid sequence, 639 residues long: Chaperone protein DnaK (639 aa).

Thr-195 carries the phosphothreonine; by autocatalysis modification. A compositionally biased stretch (low complexity) spans 601–618; the sequence is NAAAGAAPAGEPAPGEPQ. The disordered stretch occupies residues 601–639; it reads NAAAGAAPAGEPAPGEPQAEQKKDDGVIDAEYVDVDEKK. Residues 627-639 show a composition bias toward acidic residues; sequence VIDAEYVDVDEKK.

This sequence belongs to the heat shock protein 70 family.

Functionally, acts as a chaperone. This chain is Chaperone protein DnaK, found in Acidobacterium capsulatum (strain ATCC 51196 / DSM 11244 / BCRC 80197 / JCM 7670 / NBRC 15755 / NCIMB 13165 / 161).